The sequence spans 412 residues: Phosphatidylinositol 3,4,5-trisphosphate 3-phosphatase and protein-tyrosine-phosphatase PTEN1 (412 aa).

Residues 42 to 211 (RRLIIGGYDL…KYWSDLLSFS (170 aa)) form the Phosphatase tensin-type domain. Cysteine 152 (phosphocysteine intermediate) is an active-site residue. The region spanning 239–396 (VDSVFFVVSE…FSLELLFGPA (158 aa)) is the C2 tensin-type domain.

Belongs to the PTEN phosphatase protein family. In terms of tissue distribution, expressed exclusively in pollen grains during the late stage of development (at protein level).

It catalyses the reaction O-phospho-L-tyrosyl-[protein] + H2O = L-tyrosyl-[protein] + phosphate. The catalysed reaction is a 1,2-diacyl-sn-glycero-3-phospho-(1D-myo-inositol-3,4,5-trisphosphate) + H2O = a 1,2-diacyl-sn-glycero-3-phospho-(1D-myo-inositol-4,5-bisphosphate) + phosphate. Inhibited by vanadate. Functionally, protein tyrosine phosphatase that also exhibits lipid phosphatase activity. Can use phosphatidylinositol substrates such as PtdIns(3,4,5)P(3) as substrate. Pollen-specific phosphatase required for pollen development. In Arabidopsis thaliana (Mouse-ear cress), this protein is Phosphatidylinositol 3,4,5-trisphosphate 3-phosphatase and protein-tyrosine-phosphatase PTEN1.